Reading from the N-terminus, the 668-residue chain is Break repair meiotic recombinase recruitment factor 1 (668 aa).

Disordered stretches follow at residues 1-142, 155-333, 349-465, 482-521, and 642-668; these read MTKR…AQSP, LQEA…GCSS, LEER…GGQN, VLEHREIADDPLQEPGAQQGIPDTTSELAGQRDHLPHSAD, and LGGKAPLPYPSKGPGNIPRGDPPWREL. Basic and acidic residues predominate over residues 114 to 125; sequence TRKEEMKDEDRG. The segment covering 166–180 has biased composition (polar residues); sequence QADSARPEQSSQSPV. Residues 208–251 are compositionally biased toward basic and acidic residues; that stretch reads SQDHLSEQGADDSKPETDRVPGDGGQKEHLPSIDSEGEKPDRGA. Low complexity predominate over residues 279-296; the sequence is TPASAPTSGPAPGLGPAS. The span at 305 to 316 shows a compositional bias: polar residues; that stretch reads AQGSPDPQQTPS. Ser-370 is modified (phosphoserine). Residues 391–400 show a composition bias toward low complexity; it reads TGETTGESGE.

In terms of assembly, interacts with HSF2BP (via N-terminus) and BRCA2; the interaction with HSF2BP is direct and allows the formation of a ternary complex. The complex BRME1:HSF2BP:BRCA2 interacts with SPATA22, MEIOB and RAD51.

The protein resides in the chromosome. Functionally, meiotic recombination factor component of recombination bridges involved in meiotic double-strand break repair. Modulates the localization of recombinases DMC1:RAD51 to meiotic double-strand break (DSB) sites through the interaction with and stabilization of the BRCA2:HSF2BP complex during meiotic recombination. Indispensable for the DSB repair, homologous synapsis, and crossover formation that are needed for progression past metaphase I, is essential for spermatogenesis and male fertility. This is Break repair meiotic recombinase recruitment factor 1 from Homo sapiens (Human).